The sequence spans 262 residues: Acyl-[acyl-carrier-protein]--UDP-N-acetylglucosamine O-acyltransferase (262 aa).

This sequence belongs to the transferase hexapeptide repeat family. LpxA subfamily. As to quaternary structure, homotrimer.

The protein localises to the cytoplasm. It catalyses the reaction a (3R)-hydroxyacyl-[ACP] + UDP-N-acetyl-alpha-D-glucosamine = a UDP-3-O-[(3R)-3-hydroxyacyl]-N-acetyl-alpha-D-glucosamine + holo-[ACP]. Its pathway is glycolipid biosynthesis; lipid IV(A) biosynthesis; lipid IV(A) from (3R)-3-hydroxytetradecanoyl-[acyl-carrier-protein] and UDP-N-acetyl-alpha-D-glucosamine: step 1/6. Its function is as follows. Involved in the biosynthesis of lipid A, a phosphorylated glycolipid that anchors the lipopolysaccharide to the outer membrane of the cell. This Pectobacterium carotovorum subsp. carotovorum (strain PC1) protein is Acyl-[acyl-carrier-protein]--UDP-N-acetylglucosamine O-acyltransferase.